The chain runs to 51 residues: Large ribosomal subunit protein bL33 (51 aa).

The protein belongs to the bacterial ribosomal protein bL33 family.

In Marinobacter nauticus (strain ATCC 700491 / DSM 11845 / VT8) (Marinobacter aquaeolei), this protein is Large ribosomal subunit protein bL33.